Consider the following 187-residue polypeptide: Ribosome-recycling factor (187 aa).

The protein belongs to the RRF family.

The protein localises to the cytoplasm. Its function is as follows. Responsible for the release of ribosomes from messenger RNA at the termination of protein biosynthesis. May increase the efficiency of translation by recycling ribosomes from one round of translation to another. This is Ribosome-recycling factor from Methylobacterium radiotolerans (strain ATCC 27329 / DSM 1819 / JCM 2831 / NBRC 15690 / NCIMB 10815 / 0-1).